The following is a 266-amino-acid chain: 5'-nucleotidase SurE (266 aa).

Residues D8, D9, S39, and N95 each contribute to the a divalent metal cation site.

It belongs to the SurE nucleotidase family. A divalent metal cation serves as cofactor.

The protein localises to the cytoplasm. The catalysed reaction is a ribonucleoside 5'-phosphate + H2O = a ribonucleoside + phosphate. Functionally, nucleotidase that shows phosphatase activity on nucleoside 5'-monophosphates. The chain is 5'-nucleotidase SurE from Syntrophus aciditrophicus (strain SB).